We begin with the raw amino-acid sequence, 302 residues long: Protein FdhE homolog (302 aa).

This sequence belongs to the FdhE family.

It localises to the cytoplasm. Functionally, necessary for formate dehydrogenase activity. The sequence is that of Protein FdhE homolog from Shewanella sp. (strain MR-4).